We begin with the raw amino-acid sequence, 493 residues long: Tripartite motif-containing protein 5 (493 aa).

The residue at position 2 (Ala-2) is an N-acetylalanine. An RING-type zinc finger spans residues 15 to 59 (CPICLELLTQPLSLDCGHSFCQACLTANHKKSMLDKGESSCPVCR). Position 86 is a phosphoserine (Ser-86). The segment at 90–132 (QKVDHCAHHGEKLLLFCQEDGKVICWLCERSQEHRGHHTFLTE) adopts a B box-type zinc-finger fold. Positions 95, 98, 117, and 123 each coordinate Zn(2+). Residues 131–240 (TEEVAREYQV…LISDLERRLQ (110 aa)) adopt a coiled-coil conformation. The tract at residues 185–198 (FEQLRDILDWEESN) is required for interaction with GABARAP and for autophagy. Positions 281–493 (LKGMLEVFRE…VPMTLCSPSS (213 aa)) constitute a B30.2/SPRY domain.

It belongs to the TRIM/RBCC family. Can form homodimers and homotrimers. In addition to lower-order dimerization, also exhibits a higher-order multimerization and both low- and high-order multimerizations are essential for its restriction activity. Interacts with BTBD1 and BTBD2. Interacts with PSMC4, PSMC5, PSMD7 and HSPA8/HSC70. Interacts (via B30.2/SPRY domain) with HSPA1A/B. Interacts with PSMC2, MAP3K7/TAK1, TAB2 and TAB3. Interacts with SQSTM1. Interacts with TRIM6 and TRIM34. Interacts with ULK1 (phosphorylated form), GABARAP, GABARAPL1, GABARAPL2, MAP1LC3A, MAP1LC3C and BECN1. Degraded in a proteasome-independent fashion in the absence of viral infection but in a proteasome-dependent fashion following exposure to restriction sensitive virus. Post-translationally, autoubiquitinated in a RING finger- and UBE2D2-dependent manner. Monoubiquitinated by TRIM21. Deubiquitinated by Yersinia YopJ. Ubiquitination may not lead to proteasomal degradation.

It localises to the cytoplasm. It is found in the nucleus. The catalysed reaction is S-ubiquitinyl-[E2 ubiquitin-conjugating enzyme]-L-cysteine + [acceptor protein]-L-lysine = [E2 ubiquitin-conjugating enzyme]-L-cysteine + N(6)-ubiquitinyl-[acceptor protein]-L-lysine.. The protein operates within protein modification; protein ubiquitination. Functionally, capsid-specific restriction factor that prevents infection from non-host-adapted retroviruses. Blocks viral replication early in the life cycle, after viral entry but before reverse transcription. In addition to acting as a capsid-specific restriction factor, also acts as a pattern recognition receptor that activates innate immune signaling in response to the retroviral capsid lattice. Binding to the viral capsid triggers its E3 ubiquitin ligase activity, and in concert with the heterodimeric ubiquitin conjugating enzyme complex UBE2V1-UBE2N (also known as UBC13-UEV1A complex) generates 'Lys-63'-linked polyubiquitin chains, which in turn are catalysts in the autophosphorylation of the MAP3K7/TAK1 complex (includes TAK1, TAB2, and TAB3). Activation of the MAP3K7/TAK1 complex by autophosphorylation results in the induction and expression of NF-kappa-B and MAPK-responsive inflammatory genes, thereby leading to an innate immune response in the infected cell. Plays a role in regulating autophagy through activation of autophagy regulator BECN1 by causing its dissociation from its inhibitors BCL2 and TAB2. This is Tripartite motif-containing protein 5 (TRIM5) from Pan troglodytes (Chimpanzee).